Reading from the N-terminus, the 309-residue chain is Hydroxyacylglutathione hydrolase, mitochondrial (309 aa).

A mitochondrion-targeting transit peptide spans 1–24; sequence MVLGRGSLCLRSLSALGATCARRG. Lysine 90 carries the post-translational modification N6-acetyllysine. Positions 103, 105, 107, and 108 each coordinate Zn(2+). An N6-acetyllysine modification is found at lysine 117. Histidine 159 and aspartate 183 together coordinate Zn(2+). Residues 192–194 and 222–224 contribute to the substrate site; these read KFY and HEY. Histidine 222 is a binding site for Zn(2+). Position 230 is an N6-acetyllysine; alternate (lysine 230). At lysine 230 the chain carries N6-succinyllysine; alternate. Position 298–301 (298–301) interacts with substrate; that stretch reads RREK.

It belongs to the metallo-beta-lactamase superfamily. Glyoxalase II family. As to quaternary structure, monomer. Zn(2+) is required as a cofactor.

It is found in the mitochondrion matrix. The protein localises to the cytoplasm. The enzyme catalyses an S-(2-hydroxyacyl)glutathione + H2O = a 2-hydroxy carboxylate + glutathione + H(+). It catalyses the reaction (R)-S-lactoylglutathione + H2O = (R)-lactate + glutathione + H(+). It functions in the pathway secondary metabolite metabolism; methylglyoxal degradation; (R)-lactate from methylglyoxal: step 2/2. Functionally, thiolesterase that catalyzes the hydrolysis of S-D-lactoyl-glutathione to form glutathione and D-lactic acid. In Mus musculus (Mouse), this protein is Hydroxyacylglutathione hydrolase, mitochondrial (Hagh).